The sequence spans 416 residues: MQITILGSGVIGVTTAYYLAKLGHEVTVIDREEGPAPETSFANAGQVSPGYASPWAAPSIPLKAAKWLFQKHAPLILRLTTDPVQYRWLLQMLANCTDSRYKINKTRMVRVAEYSRDCLIELRKDTGIEYDQRSQGTLQLFREQYQLDGIGKDIEVLRQDGVPFEVLDRDGCVNVEPALAHAKDKFVGGLRLPNDETGDCFKFTNALAKIAEGLGVKFRFGVNIKSLLMSGGKISGVETSEGIVTAERYVVALGSYTPALIKALGLNAPIYPVKGYSITAPIVDESRAPVSTVLDESYKIAITRLGDRIRVGGMAEVSGFTDDLPAARRATLDLSVTDLFPGGDLKAATFWSGLRPMTPDSTPIIGGTRYDNLFINAGHGTLGWTMACGSGRLLADLISGNKADIRADDLGIARYN.

3–17 contributes to the FAD binding site; sequence ITILGSGVIGVTTAY.

Belongs to the DadA oxidoreductase family. FAD serves as cofactor.

It catalyses the reaction a D-alpha-amino acid + A + H2O = a 2-oxocarboxylate + AH2 + NH4(+). The protein operates within amino-acid degradation; D-alanine degradation; NH(3) and pyruvate from D-alanine: step 1/1. Oxidative deamination of D-amino acids. This chain is D-amino acid dehydrogenase, found in Brucella canis (strain ATCC 23365 / NCTC 10854 / RM-666).